We begin with the raw amino-acid sequence, 442 residues long: Casein kinase 1-like protein 10 (442 aa).

In terms of domain architecture, Protein kinase spans 9 to 278; that stretch reads FKLGRKIGSG…LKRLFRDLFI (270 aa). Residues 15–23 and Lys-38 each bind ATP; that span reads IGSGSFGEL. Asp-128 functions as the Proton acceptor in the catalytic mechanism. Disordered regions lie at residues 299–323 and 381–421; these read GSIS…ERNE and AVMS…LSAR. Residues 305 to 317 show a composition bias toward pro residues; the sequence is RPNPKPALDPPGP. Residues 384–394 show a composition bias toward low complexity; it reads SSSQPGSSGEL. The segment covering 400–417 has biased composition (polar residues); it reads SKLFSSSAQKIQPVQETK.

The protein belongs to the protein kinase superfamily. CK1 Ser/Thr protein kinase family. Casein kinase I subfamily. As to quaternary structure, monomer. Autophosphorylated.

The protein localises to the cytoplasm. The protein resides in the cell junction. Its subcellular location is the plasmodesma. It catalyses the reaction L-seryl-[protein] + ATP = O-phospho-L-seryl-[protein] + ADP + H(+). The catalysed reaction is L-threonyl-[protein] + ATP = O-phospho-L-threonyl-[protein] + ADP + H(+). Its function is as follows. Casein kinases are operationally defined by their preferential utilization of acidic proteins such as caseins as substrates. It can phosphorylate a large number of proteins. This chain is Casein kinase 1-like protein 10, found in Arabidopsis thaliana (Mouse-ear cress).